The primary structure comprises 340 residues: Phenylalanine--tRNA ligase alpha subunit (340 aa).

E258 contributes to the Mg(2+) binding site.

The protein belongs to the class-II aminoacyl-tRNA synthetase family. Phe-tRNA synthetase alpha subunit type 1 subfamily. As to quaternary structure, tetramer of two alpha and two beta subunits. Requires Mg(2+) as cofactor.

The protein resides in the cytoplasm. It catalyses the reaction tRNA(Phe) + L-phenylalanine + ATP = L-phenylalanyl-tRNA(Phe) + AMP + diphosphate + H(+). This is Phenylalanine--tRNA ligase alpha subunit from Corynebacterium glutamicum (strain ATCC 13032 / DSM 20300 / JCM 1318 / BCRC 11384 / CCUG 27702 / LMG 3730 / NBRC 12168 / NCIMB 10025 / NRRL B-2784 / 534).